A 159-amino-acid chain; its full sequence is Transcriptional repressor NrdR (159 aa).

The segment covering 1–11 has biased composition (polar residues); sequence MQCPTCQNTDS. The disordered stretch occupies residues 1-21; sequence MQCPTCQNTDSRVLESRSADS. A zinc finger spans residues 3–34; the sequence is CPTCQNTDSRVLESRSADSGKSVRRRRECLNC. Residues 49–139 form the ATP-cone domain; it reads VSVLKKDGGR…VYRKFNGVKD (91 aa).

This sequence belongs to the NrdR family. Requires Zn(2+) as cofactor.

Functionally, negatively regulates transcription of bacterial ribonucleotide reductase nrd genes and operons by binding to NrdR-boxes. This chain is Transcriptional repressor NrdR, found in Prochlorococcus marinus (strain AS9601).